Here is a 902-residue protein sequence, read N- to C-terminus: Probable polyribonucleotide nucleotidyltransferase 1, chloroplastic (902 aa).

Residues 1–66 (MLATPGALHH…RRRAAGARVR (66 aa)) constitute a chloroplast transit peptide. Positions 44–53 (VAASASTSRR) are enriched in low complexity. Residues 44 to 93 (VAASASTSRRGGARRRAAGARVRASVGEEAPPVVTEEASTSGGPTKFSTK) form a disordered region. Polar residues predominate over residues 80–91 (EASTSGGPTKFS). The KH domain occupies 693-753 (PLIHVMKVKP…SSLEKSKAII (61 aa)). The S1 motif domain occupies 763 to 832 (GEIYRNCEIK…DKGQLRLSSR (70 aa)). The interval 833-902 (ALLPDANQES…ASQGSEMGTE (70 aa)) is disordered. Over residues 839-850 (NQESSSKQQAGG) the composition is skewed to polar residues. Residues 852 to 862 (TREKAPQKDNL) are compositionally biased toward basic and acidic residues. The span at 877 to 888 (EASTAENNATAS) shows a compositional bias: low complexity.

The protein belongs to the polyribonucleotide nucleotidyltransferase family.

It localises to the plastid. The protein localises to the chloroplast. The catalysed reaction is RNA(n+1) + phosphate = RNA(n) + a ribonucleoside 5'-diphosphate. Its function is as follows. Involved in the metabolism of all major classes of plastid RNAs. Required for efficient 3'-end processing of mRNAs and 3'-end maturation of rRNA transcripts, but is not sufficient to mediate their degradation. Mediates tRNA degradation. May function as a poly(A) mRNA 3'-5' degrading phosphorylase. The chain is Probable polyribonucleotide nucleotidyltransferase 1, chloroplastic (PNP1) from Oryza sativa subsp. japonica (Rice).